Reading from the N-terminus, the 439-residue chain is Xylose isomerase (439 aa).

Residues His-101 and Asp-104 contribute to the active site. Residues Glu-232, Glu-268, His-271, Asp-296, Asp-307, Asp-309, and Asp-339 each contribute to the Mg(2+) site.

This sequence belongs to the xylose isomerase family. In terms of assembly, homotetramer. It depends on Mg(2+) as a cofactor.

It is found in the cytoplasm. It carries out the reaction alpha-D-xylose = alpha-D-xylulofuranose. The chain is Xylose isomerase from Photobacterium profundum (strain SS9).